Here is a 746-residue protein sequence, read N- to C-terminus: Exostosin-1 (746 aa).

Residues 1–7 (MQAKKRY) are Cytoplasmic-facing. The helical; Signal-anchor for type II membrane protein transmembrane segment at 8–28 (FILLSAGSCLALLFYFGGLQF) threads the bilayer. Residues 29 to 746 (RASRSHSRRE…RKKYRDIERL (718 aa)) are Lumenal-facing. N-linked (GlcNAc...) asparagine glycosylation occurs at N89. 2 disulfide bridges follow: C98-C103 and C109-C152. A protein-binding residues include L166 and Y203. 4 residues coordinate UDP: K267, K269, Y271, and R280. C298 and C312 form a disulfide bridge. Residue H300 coordinates a protein. Positions 319 and 324 each coordinate UDP. An N-linked (GlcNAc...) asparagine glycan is attached at N330. 2 cysteine pairs are disulfide-bonded: C334-C355 and C652-C704. UDP-binding residues include R346 and E349.

It belongs to the glycosyltransferase 47 family. Part of the heparan sulfate polymerase, a dimeric complex composed of EXT1 and EXT2. Could also form homooligomeric complexes. Interacts with NDST1. In terms of processing, N-glycosylated.

The protein localises to the golgi apparatus membrane. It is found in the golgi apparatus. It localises to the cis-Golgi network membrane. The protein resides in the endoplasmic reticulum membrane. The enzyme catalyses 3-O-{alpha-D-GlcNAc-[(1-&gt;4)-beta-D-GlcA-(1-&gt;4)-alpha-D-GlcNAc](n)-(1-&gt;4)-beta-D-GlcA-(1-&gt;3)-beta-D-Gal-(1-&gt;3)-beta-D-Gal-(1-&gt;4)-beta-D-Xyl}-L-seryl-[protein] + UDP-alpha-D-glucuronate = 3-O-{[(1-&gt;4)-beta-D-GlcA-(1-&gt;4)-alpha-D-GlcNAc](n+1)-(1-&gt;4)-beta-D-GlcA-(1-&gt;3)-beta-D-Gal-(1-&gt;3)-beta-D-Gal-(1-&gt;4)-beta-D-Xyl}-L-seryl-[protein] + UDP + H(+). It participates in protein modification; protein glycosylation. Functionally, glycosyltransferase forming with EXT2 the heterodimeric heparan sulfate polymerase which catalyzes the elongation of the heparan sulfate glycan backbone. Glycan backbone extension consists in the alternating transfer of (1-&gt;4)-beta-D-GlcA and (1-&gt;4)-alpha-D-GlcNAc residues from their respective UDP-sugar donors. Both EXT1 and EXT2 are required for the full activity of the polymerase since EXT1 bears the N-acetylglucosaminyl-proteoglycan 4-beta-glucuronosyltransferase activity within the complex while EXT2 carries the glucuronosyl-N-acetylglucosaminyl-proteoglycan 4-alpha-N-acetylglucosaminyltransferase activity. Heparan sulfate proteoglycans are ubiquitous components of the extracellular matrix and play an important role in tissue homeostasis and signaling. This is Exostosin-1 (EXT1) from Papio anubis (Olive baboon).